Here is a 274-residue protein sequence, read N- to C-terminus: Pantothenate synthetase (274 aa).

27 to 34 provides a ligand contact to ATP; it reads MGALHQGH. His34 acts as the Proton donor in catalysis. Position 58 (Gln58) interacts with (R)-pantoate. Gln58 provides a ligand contact to beta-alanine. ATP is bound at residue 144–147; that stretch reads GKKD. Gln150 is a binding site for (R)-pantoate. Residues Ile173 and 181-184 contribute to the ATP site; that span reads LSSR.

Belongs to the pantothenate synthetase family. Homodimer.

The protein resides in the cytoplasm. It catalyses the reaction (R)-pantoate + beta-alanine + ATP = (R)-pantothenate + AMP + diphosphate + H(+). It participates in cofactor biosynthesis; (R)-pantothenate biosynthesis; (R)-pantothenate from (R)-pantoate and beta-alanine: step 1/1. Catalyzes the condensation of pantoate with beta-alanine in an ATP-dependent reaction via a pantoyl-adenylate intermediate. In Sulfurovum sp. (strain NBC37-1), this protein is Pantothenate synthetase.